Here is a 296-residue protein sequence, read N- to C-terminus: Enoyl-CoA hydratase ACTT3 (296 aa).

The short motif at 294–296 (PKL) is the Peroxisomal targeting signal type 1 element.

This sequence belongs to the enoyl-CoA hydratase/isomerase family.

It is found in the peroxisome. The enzyme catalyses a (3S)-3-hydroxyacyl-CoA = a (2E)-enoyl-CoA + H2O. The catalysed reaction is a 4-saturated-(3S)-3-hydroxyacyl-CoA = a (3E)-enoyl-CoA + H2O. It participates in mycotoxin biosynthesis. Its function is as follows. Enoyl-CoA hydratase; part of the gene clusters that mediate the biosynthesis of the host-selective toxins (HSTs) ACT-toxins responsible for brown spot of tangerine disease by the tangerine pathotype which affects tangerines and mandarins. ACT-toxins consist of three moieties, 9,10-epoxy-8-hydroxy-9-methyl-decatrienoic acid (EDA), valine and a polyketide. ACT-toxin I is toxic to both citrus and pear; toxin II the 5''-deoxy derivative of ACT-toxin I, is highly toxic to pear and slightly toxic to citrus. On cellular level, ACT-toxins affect plasma membrane of susceptible cells and cause a sudden increase in loss of K(+) after a few minutes of toxin treatment. The acyl-CoA ligase ACTT1, the hydrolase ACTT2, the enoyl-CoA hydratases ACTT3 and ACTT6, and the acyl-CoA synthetase ACTT5 are all involved in the biosynthesis of the AK-, AF- and ACT-toxin common 9,10-epoxy-8-hydroxy-9-methyl-decatrienoic acid (EDA) structural moiety. The exact role of each enzyme, and of additional enzymes identified within the AF-toxin clusters have still to be determined. On the other hand, ACTTS1 to ACTTS4 are specific to the tangerine pathotype. The function of ACTTS3 is to elongate the polyketide chain portion of ACT-toxin that is unique to this toxin. The enoyl-reductase ACTTS2 might complement the missing enoyl-reductase (ER) domain in ACTTS3 in the synthesis of the polyketide portion of ACT-toxin. The roles of the nonribosomal peptide synthetases-related proteins ACTTS1 and ACTTS4 have also still not been elucidated. This chain is Enoyl-CoA hydratase ACTT3, found in Alternaria alternata (Alternaria rot fungus).